The chain runs to 1349 residues: ABC multidrug transporter mdr1 (1349 aa).

A disordered region spans residues 1–62; the sequence is MPAPETGASS…PDGKQKDHGK (62 aa). Residues 35–45 are compositionally biased toward basic and acidic residues; the sequence is DNEKPHDHHSL. The next 4 helical transmembrane spans lie at 108–128, 162–182, 234–254, and 257–277; these read ILII…LPLF, YFVY…VGFI, KVGL…VAYV, and WKLA…MGGG. One can recognise an ABC transmembrane type-1 1 domain in the interval 112–402; it reads LVSAICAIAA…VAPNGQAFTN (291 aa). Residue Asn-308 is glycosylated (N-linked (GlcNAc...) asparagine). The next 2 helical transmembrane spans lie at 339 to 359 and 371 to 391; these read ILGM…GLGF and VNVG…FSLG. Residues 437 to 682 enclose the ABC transporter 1 domain; that stretch reads IEFRNVKHIY…KGTYYKLVEA (246 aa). 472–479 provides a ligand contact to ATP; that stretch reads GPSGSGKS. The next 2 helical transmembrane spans lie at 779-799 and 828-848; these read MLIG…QAFL and FFVV…AFAI. One can recognise an ABC transmembrane type-1 2 domain in the interval 780–1069; the sequence is LIGLTFSFLA…VFSFAPDMGK (290 aa). N-linked (GlcNAc...) asparagine glycans are attached at residues Asn-878 and Asn-893. 4 consecutive transmembrane segments (helical) span residues 896–916, 926–948, 1016–1036, and 1043–1063; these read GVSG…GAAM, LALV…FYML, ALVF…LGHH, and FFVC…VFSF. An ABC transporter 2 domain is found at 1104–1342; that stretch reads IEFRDVHFRY…KGRYYELVNL (239 aa). N-linked (GlcNAc...) asparagine glycosylation occurs at Asn-1126. 1139–1146 lines the ATP pocket; sequence GPSGCGKS.

It belongs to the ABC transporter superfamily. ABCB family. Multidrug resistance exporter (TC 3.A.1.201) subfamily.

The protein resides in the cell membrane. It carries out the reaction voriconazole(in) + ATP + H2O = voriconazole(out) + ADP + phosphate + H(+). Pleiotropic ABC efflux transporter that may be involved in A.fumigatus adaptation to azoles such as vorizonazole. The polypeptide is ABC multidrug transporter mdr1 (Aspergillus fumigatus (strain ATCC MYA-4609 / CBS 101355 / FGSC A1100 / Af293) (Neosartorya fumigata)).